A 457-amino-acid polypeptide reads, in one-letter code: Transmembrane protein 143 (457 aa).

2 helical membrane-spanning segments follow: residues 264 to 284 (ILNVTLIVSGVVFFVNVGMVV) and 285 to 305 (LSDLKMATSLLLLLFAAFMGL). Ser316 bears the Phosphoserine mark. The span at 429–439 (LSSPKSAPSDD) shows a compositional bias: polar residues. A disordered region spans residues 429–457 (LSSPKSAPSDDNSLEKPLGPAQPSHLVGN).

The protein resides in the membrane. The sequence is that of Transmembrane protein 143 (TMEM143) from Bos taurus (Bovine).